The following is a 375-amino-acid chain: Secreted LysM effector Vd4LysM (375 aa).

A signal peptide spans 1–24; sequence MPSVTISSTMLAGLLLMLVPASSA. Positions 57–104 constitute a LysM 1 domain; the sequence is SWWWDNEGQIPCANMPAEWGITMQDFLRWNPSITSSCGNFLNGRSYCV. The disordered stretch occupies residues 108–139; that stretch reads GEEPPVPGTPTTTTAPATTTKPSNGITTPQPI. Residues 116–129 are compositionally biased toward low complexity; it reads TPTTTTAPATTTKP. The region spanning 149–195 is the LysM 2 domain; that stretch reads KFHYISEGDRCQDILSYQKITLADFFKWNPAVKSDCSGLWSKTNACV. A compositionally biased stretch (low complexity) spans 206 to 217; sequence TTTTKPATPTTP. The tract at residues 206 to 225 is disordered; that stretch reads TTTTKPATPTTPSNGITTPQ. The LysM 3 domain maps to 237–283; that stretch reads KFHYISEGDRCQDILSYQKITQADFFKWNPAVKSDCSGLWSKTHACV. Residues 287-317 form a disordered region; that stretch reads GGQAPPPTPTTTKPTTTKPPGNGVTTPTPTQ. Residues 296-317 show a composition bias toward low complexity; it reads TTTKPTTTKPPGNGVTTPTPTQ. The region spanning 326–372 is the LysM 4 domain; that stretch reads KFHFVSPGNTCQQIVSYQKITMANFVKWNSGAGSGCNNLWGNTHACV.

The protein belongs to the secreted LysM effector family.

Functionally, might have a role in sequestration of chitin oligosaccharides (breakdown products of fungal cell walls that are released during invasion and act as triggers of host immunity) to dampen host defense. Does not play an important role during host colonization. This chain is Secreted LysM effector Vd4LysM, found in Verticillium dahliae (strain VdLs.17 / ATCC MYA-4575 / FGSC 10137) (Verticillium wilt).